We begin with the raw amino-acid sequence, 93 residues long: Small ribosomal subunit protein uS19c (93 aa).

The interval 73–93 (EFSPTRTFRGHTKSDKKSRRP) is disordered. The span at 80–93 (FRGHTKSDKKSRRP) shows a compositional bias: basic residues.

It belongs to the universal ribosomal protein uS19 family.

It localises to the plastid. The protein localises to the chloroplast. Its function is as follows. Protein S19 forms a complex with S13 that binds strongly to the 16S ribosomal RNA. The chain is Small ribosomal subunit protein uS19c (rps19) from Mesostigma viride (Green alga).